We begin with the raw amino-acid sequence, 151 residues long: 3-hydroxyacyl-[acyl-carrier-protein] dehydratase FabZ (151 aa).

The active site involves histidine 54.

It belongs to the thioester dehydratase family. FabZ subfamily.

It is found in the cytoplasm. The catalysed reaction is a (3R)-hydroxyacyl-[ACP] = a (2E)-enoyl-[ACP] + H2O. In terms of biological role, involved in unsaturated fatty acids biosynthesis. Catalyzes the dehydration of short chain beta-hydroxyacyl-ACPs and long chain saturated and unsaturated beta-hydroxyacyl-ACPs. The chain is 3-hydroxyacyl-[acyl-carrier-protein] dehydratase FabZ from Cronobacter sakazakii (strain ATCC BAA-894) (Enterobacter sakazakii).